Here is a 359-residue protein sequence, read N- to C-terminus: Peptide chain release factor 1 (359 aa).

Residue glutamine 236 is modified to N5-methylglutamine.

It belongs to the prokaryotic/mitochondrial release factor family. Methylated by PrmC. Methylation increases the termination efficiency of RF1.

It localises to the cytoplasm. Functionally, peptide chain release factor 1 directs the termination of translation in response to the peptide chain termination codons UAG and UAA. The sequence is that of Peptide chain release factor 1 from Streptococcus thermophilus (strain ATCC BAA-250 / LMG 18311).